We begin with the raw amino-acid sequence, 205 residues long: Thiamine-phosphate synthase (205 aa).

Residues 37–41 (QVREK) and Asn-69 contribute to the 4-amino-2-methyl-5-(diphosphooxymethyl)pyrimidine site. Mg(2+) contacts are provided by Asp-70 and Asp-89. Ser-108 is a 4-amino-2-methyl-5-(diphosphooxymethyl)pyrimidine binding site. Residue 134–136 (TGS) participates in 2-[(2R,5Z)-2-carboxy-4-methylthiazol-5(2H)-ylidene]ethyl phosphate binding. Position 137 (Lys-137) interacts with 4-amino-2-methyl-5-(diphosphooxymethyl)pyrimidine. Residues Gly-165 and 185–186 (IS) each bind 2-[(2R,5Z)-2-carboxy-4-methylthiazol-5(2H)-ylidene]ethyl phosphate.

The protein belongs to the thiamine-phosphate synthase family. Mg(2+) is required as a cofactor.

The enzyme catalyses 2-[(2R,5Z)-2-carboxy-4-methylthiazol-5(2H)-ylidene]ethyl phosphate + 4-amino-2-methyl-5-(diphosphooxymethyl)pyrimidine + 2 H(+) = thiamine phosphate + CO2 + diphosphate. It carries out the reaction 2-(2-carboxy-4-methylthiazol-5-yl)ethyl phosphate + 4-amino-2-methyl-5-(diphosphooxymethyl)pyrimidine + 2 H(+) = thiamine phosphate + CO2 + diphosphate. It catalyses the reaction 4-methyl-5-(2-phosphooxyethyl)-thiazole + 4-amino-2-methyl-5-(diphosphooxymethyl)pyrimidine + H(+) = thiamine phosphate + diphosphate. Its pathway is cofactor biosynthesis; thiamine diphosphate biosynthesis; thiamine phosphate from 4-amino-2-methyl-5-diphosphomethylpyrimidine and 4-methyl-5-(2-phosphoethyl)-thiazole: step 1/1. In terms of biological role, condenses 4-methyl-5-(beta-hydroxyethyl)thiazole monophosphate (THZ-P) and 2-methyl-4-amino-5-hydroxymethyl pyrimidine pyrophosphate (HMP-PP) to form thiamine monophosphate (TMP). This Clostridium botulinum (strain 657 / Type Ba4) protein is Thiamine-phosphate synthase.